The following is a 121-amino-acid chain: Small ribosomal subunit protein uS13 (121 aa).

Residues 95–121 (LPVRGQNTKNNARTRKGKAVAIAGKKK) are disordered. The segment covering 106-121 (ARTRKGKAVAIAGKKK) has biased composition (basic residues).

It belongs to the universal ribosomal protein uS13 family. As to quaternary structure, part of the 30S ribosomal subunit. Forms a loose heterodimer with protein S19. Forms two bridges to the 50S subunit in the 70S ribosome.

In terms of biological role, located at the top of the head of the 30S subunit, it contacts several helices of the 16S rRNA. In the 70S ribosome it contacts the 23S rRNA (bridge B1a) and protein L5 of the 50S subunit (bridge B1b), connecting the 2 subunits; these bridges are implicated in subunit movement. Contacts the tRNAs in the A and P-sites. The sequence is that of Small ribosomal subunit protein uS13 from Streptococcus equi subsp. zooepidemicus (strain H70).